Here is a 458-residue protein sequence, read N- to C-terminus: Exodeoxyribonuclease 7 large subunit (458 aa).

Belongs to the XseA family. Heterooligomer composed of large and small subunits.

The protein resides in the cytoplasm. It catalyses the reaction Exonucleolytic cleavage in either 5'- to 3'- or 3'- to 5'-direction to yield nucleoside 5'-phosphates.. Bidirectionally degrades single-stranded DNA into large acid-insoluble oligonucleotides, which are then degraded further into small acid-soluble oligonucleotides. This Halalkalibacterium halodurans (strain ATCC BAA-125 / DSM 18197 / FERM 7344 / JCM 9153 / C-125) (Bacillus halodurans) protein is Exodeoxyribonuclease 7 large subunit.